A 159-amino-acid chain; its full sequence is Ribosomal RNA large subunit methyltransferase H (159 aa).

Residues L76, G108, and 127-132 (FGKMTL) contribute to the S-adenosyl-L-methionine site.

This sequence belongs to the RNA methyltransferase RlmH family. As to quaternary structure, homodimer.

Its subcellular location is the cytoplasm. The catalysed reaction is pseudouridine(1915) in 23S rRNA + S-adenosyl-L-methionine = N(3)-methylpseudouridine(1915) in 23S rRNA + S-adenosyl-L-homocysteine + H(+). In terms of biological role, specifically methylates the pseudouridine at position 1915 (m3Psi1915) in 23S rRNA. The sequence is that of Ribosomal RNA large subunit methyltransferase H from Lysinibacillus sphaericus (strain C3-41).